Consider the following 399-residue polypeptide: Protein HYM1 (399 aa).

The span at 363–382 (VSNNNASSSNVASITSPSSV) shows a compositional bias: low complexity. A disordered region spans residues 363–399 (VSNNNASSSNVASITSPSSVMNNQSSILTHSTSPDSR). The span at 383–399 (MNNQSSILTHSTSPDSR) shows a compositional bias: polar residues.

The protein belongs to the Mo25 family.

This chain is Protein HYM1 (HYM1), found in Saccharomyces cerevisiae (strain ATCC 204508 / S288c) (Baker's yeast).